A 335-amino-acid polypeptide reads, in one-letter code: Galactinol synthase 2 (335 aa).

Lys-103 is an active-site residue. Residues Asp-119, Asp-121, and His-257 each coordinate Mn(2+).

It belongs to the glycosyltransferase 8 family. Galactosyltransferase subfamily. A divalent metal cation serves as cofactor. As to expression, accumulates in mature seeds.

It is found in the cytoplasm. The enzyme catalyses myo-inositol + UDP-alpha-D-galactose = alpha-D-galactosyl-(1-&gt;3)-1D-myo-inositol + UDP + H(+). Galactinol synthase involved in the biosynthesis of raffinose family oligosaccharides (RFOs) that function as osmoprotectants. Promotes stress tolerance of factors such as drought, chilling, salinity and methylviologen (MV), a superoxide radical generating drug, by mediating an increase in levels of the endogenous osmoprotective compounds, galactinol and raffinose. The sequence is that of Galactinol synthase 2 (GOLS2) from Arabidopsis thaliana (Mouse-ear cress).